The following is a 492-amino-acid chain: Probable glycogen synthase 2 (492 aa).

Position 15 (lysine 15) interacts with ADP-alpha-D-glucose.

The protein belongs to the glycosyltransferase 1 family. Bacterial/plant glycogen synthase subfamily.

The enzyme catalyses [(1-&gt;4)-alpha-D-glucosyl](n) + ADP-alpha-D-glucose = [(1-&gt;4)-alpha-D-glucosyl](n+1) + ADP + H(+). The protein operates within glycan biosynthesis; glycogen biosynthesis. Synthesizes alpha-1,4-glucan chains using ADP-glucose. The protein is Probable glycogen synthase 2 (glgA2) of Nostoc sp. (strain PCC 7120 / SAG 25.82 / UTEX 2576).